We begin with the raw amino-acid sequence, 269 residues long: Small ribosomal subunit protein uS2 (269 aa).

The interval 224–269 (ANQGREDSEDVYSETENDTEETDEELVSEEDLKEFVENSEEESDEE) is disordered. The segment covering 230 to 269 (DSEDVYSETENDTEETDEELVSEEDLKEFVENSEEESDEE) has biased composition (acidic residues).

Belongs to the universal ribosomal protein uS2 family.

This Finegoldia magna (strain ATCC 29328 / DSM 20472 / WAL 2508) (Peptostreptococcus magnus) protein is Small ribosomal subunit protein uS2.